The primary structure comprises 327 residues: 4-hydroxythreonine-4-phosphate dehydrogenase (327 aa).

Substrate contacts are provided by H134 and T135. Residues H164, H209, and H264 each coordinate a divalent metal cation. Substrate contacts are provided by K272, N281, and R290.

Belongs to the PdxA family. As to quaternary structure, homodimer. It depends on Zn(2+) as a cofactor. Mg(2+) is required as a cofactor. Requires Co(2+) as cofactor.

The protein localises to the cytoplasm. The catalysed reaction is 4-(phosphooxy)-L-threonine + NAD(+) = 3-amino-2-oxopropyl phosphate + CO2 + NADH. Its pathway is cofactor biosynthesis; pyridoxine 5'-phosphate biosynthesis; pyridoxine 5'-phosphate from D-erythrose 4-phosphate: step 4/5. Catalyzes the NAD(P)-dependent oxidation of 4-(phosphooxy)-L-threonine (HTP) into 2-amino-3-oxo-4-(phosphooxy)butyric acid which spontaneously decarboxylates to form 3-amino-2-oxopropyl phosphate (AHAP). This is 4-hydroxythreonine-4-phosphate dehydrogenase from Shewanella frigidimarina (strain NCIMB 400).